The sequence spans 335 residues: L-lactate dehydrogenase B chain (335 aa).

NAD(+) is bound by residues 29–57 (GQVGMACAISILEKGLCDELALVDVVEDK) and Arg-99. Arg-106, Asn-138, and Arg-169 together coordinate substrate. Asn-138 provides a ligand contact to NAD(+). The Proton acceptor role is filled by His-193. Residue Thr-248 coordinates substrate.

This sequence belongs to the LDH/MDH superfamily. LDH family. Homotetramer.

The protein resides in the cytoplasm. The enzyme catalyses (S)-lactate + NAD(+) = pyruvate + NADH + H(+). The protein operates within fermentation; pyruvate fermentation to lactate; (S)-lactate from pyruvate: step 1/1. In terms of biological role, interconverts simultaneously and stereospecifically pyruvate and lactate with concomitant interconversion of NADH and NAD(+). The sequence is that of L-lactate dehydrogenase B chain (LDHB) from Sceloporus undulatus (Eastern fence lizard).